The sequence spans 20 residues: Fibrinogen beta chain (20 aa).

Positions 1-12 (IIDYYDEGEEDR) are enriched in acidic residues. Residues 1 to 20 (IIDYYDEGEEDRDVGVVDAR) form a disordered region.

As to quaternary structure, heterohexamer; disulfide linked. Contains 2 sets of 3 non-identical chains (alpha, beta and gamma). The 2 heterotrimers are in head to head conformation with the N-termini in a small central domain. Conversion of fibrinogen to fibrin is triggered by thrombin, which cleaves fibrinopeptides A and B from alpha and beta chains, and thus exposes the N-terminal polymerization sites responsible for the formation of the soft clot.

The protein localises to the secreted. Cleaved by the protease thrombin to yield monomers which, together with fibrinogen alpha (FGA) and fibrinogen gamma (FGG), polymerize to form an insoluble fibrin matrix. Fibrin has a major function in hemostasis as one of the primary components of blood clots. In addition, functions during the early stages of wound repair to stabilize the lesion and guide cell migration during re-epithelialization. Was originally thought to be essential for platelet aggregation, based on in vitro studies using anticoagulated blood. However subsequent studies have shown that it is not absolutely required for thrombus formation in vivo. Enhances expression of SELP in activated platelets. Maternal fibrinogen is essential for successful pregnancy. Fibrin deposition is also associated with infection, where it protects against IFNG-mediated hemorrhage. May also facilitate the antibacterial immune response via both innate and T-cell mediated pathways. The polypeptide is Fibrinogen beta chain (FGB) (Felis catus (Cat)).